The primary structure comprises 242 residues: 3-dehydroquinate dehydratase (242 aa).

3-dehydroquinate is bound by residues 39 to 41 (EIR) and R73. H135 acts as the Proton donor/acceptor in catalysis. Residue K162 is the Schiff-base intermediate with substrate of the active site. The 3-dehydroquinate site is built by R203 and Q228.

Belongs to the type-I 3-dehydroquinase family. In terms of assembly, homodimer.

The catalysed reaction is 3-dehydroquinate = 3-dehydroshikimate + H2O. It functions in the pathway metabolic intermediate biosynthesis; chorismate biosynthesis; chorismate from D-erythrose 4-phosphate and phosphoenolpyruvate: step 3/7. Involved in the third step of the chorismate pathway, which leads to the biosynthesis of aromatic amino acids. Catalyzes the cis-dehydration of 3-dehydroquinate (DHQ) and introduces the first double bond of the aromatic ring to yield 3-dehydroshikimate. The sequence is that of 3-dehydroquinate dehydratase from Methanosarcina mazei (strain ATCC BAA-159 / DSM 3647 / Goe1 / Go1 / JCM 11833 / OCM 88) (Methanosarcina frisia).